A 146-amino-acid chain; its full sequence is Pre-mRNA-splicing factor cwf14 (146 aa).

The protein belongs to the BUD31 (G10) family. In terms of assembly, belongs to the 40S cdc5-associated complex (or cwf complex), a spliceosome sub-complex reminiscent of a late-stage spliceosome composed of the U2, U5 and U6 snRNAs and at least brr2, cdc5, cwf2/prp3, cwf3/syf1, cwf4/syf3, cwf5/ecm2, spp42/cwf6, cwf7/spf27, cwf8, cwf9, cwf10, cwf11, cwf12, prp45/cwf13, cwf14, cwf15, cwf16, cwf17, cwf18, cwf19, cwf20, cwf21, cwf22, cwf23, cwf24, cwf25, cwf26, cyp7/cwf27, cwf28, cwf29/ist3, lea1, msl1, prp5/cwf1, prp10, prp12/sap130, prp17, prp22, sap61, sap62, sap114, sap145, slu7, smb1, smd1, smd3, smf1, smg1 and syf2.

The protein resides in the nucleus. In terms of biological role, involved in mRNA splicing where it associates with cdc5 and the other cwf proteins as part of the spliceosome. This Schizosaccharomyces pombe (strain 972 / ATCC 24843) (Fission yeast) protein is Pre-mRNA-splicing factor cwf14 (cwf14).